Here is a 239-residue protein sequence, read N- to C-terminus: UDP-2,3-diacylglucosamine hydrolase (239 aa).

Residues Asp8, His10, Asp41, Asn79, and His114 each coordinate Mn(2+). A substrate-binding site is contributed by 79-80; sequence NR. Positions 122, 160, 164, 167, and 195 each coordinate substrate. His195 and His197 together coordinate Mn(2+).

The protein belongs to the LpxH family. Mn(2+) is required as a cofactor.

It localises to the cell inner membrane. The enzyme catalyses UDP-2-N,3-O-bis[(3R)-3-hydroxytetradecanoyl]-alpha-D-glucosamine + H2O = 2-N,3-O-bis[(3R)-3-hydroxytetradecanoyl]-alpha-D-glucosaminyl 1-phosphate + UMP + 2 H(+). It participates in glycolipid biosynthesis; lipid IV(A) biosynthesis; lipid IV(A) from (3R)-3-hydroxytetradecanoyl-[acyl-carrier-protein] and UDP-N-acetyl-alpha-D-glucosamine: step 4/6. Hydrolyzes the pyrophosphate bond of UDP-2,3-diacylglucosamine to yield 2,3-diacylglucosamine 1-phosphate (lipid X) and UMP by catalyzing the attack of water at the alpha-P atom. Involved in the biosynthesis of lipid A, a phosphorylated glycolipid that anchors the lipopolysaccharide to the outer membrane of the cell. The polypeptide is UDP-2,3-diacylglucosamine hydrolase (Sodalis glossinidius (strain morsitans)).